A 541-amino-acid chain; its full sequence is MAAVIRIRAMAAGTRLRVLNCGLGTTIRSLCSQPVSVNERIENKRHAALLGGGQRRIDAQHKRGKLTARERISLLLDPGSFLESDMFVEHRCADFGMAAEKNKFPGDSVVTGRGRINGRLVYVFSQDFTVFGGSLSGAHAQKICKIMDQAITVGAPVIGLNDSGGARIQEGVESLAGYADIFLRNVTASGVIPQISLIMGPCAGGAVYSPALTDFTFMVKDTSYLFITGPEFVKSVTNEDVTQEQLGGAKTHTTVSGVAHRAFDNDVDALCNLREFLNFLPLSNQDPASIRECHDPSDRLVPELDTVVPLESSKAYNMLDIIHAVIDEREFFEIMPNYAKNIVIGFARMNGRTVGIVGNQPNVASGCLDINSSVKGARFVRFCDAFSIPLITFVDVPGFLPGTAQEYGGIIRHGAKLLYAFAEATVPKITVITRKAYGGAYDVMSSKHLLGDTNYAWPTAEIAVMGAKGAVEIIFKGHEDVEAAQAEYVEKFANPFPAAVRGFVDDIIQPSSTRARICCDLEVLASKKVHRPWRKHANVPL.

A mitochondrion-targeting transit peptide spans 1-28 (MAAVIRIRAMAAGTRLRVLNCGLGTTIR). One can recognise a CoA carboxyltransferase N-terminal domain in the interval 34–292 (PVSVNERIEN…SNQDPASIRE (259 aa)). Positions 34 to 535 (PVSVNERIEN…SKKVHRPWRK (502 aa)) are carboxyltransferase. S73 is modified (phosphoserine). At K101 the chain carries N6-acetyllysine; alternate. Position 101 is an N6-succinyllysine; alternate (K101). K250 is modified (N6-succinyllysine). The CoA carboxyltransferase C-terminal domain maps to 296 to 535 (PSDRLVPELD…SKKVHRPWRK (240 aa)). The segment at 327–360 (DEREFFEIMPNYAKNIVIGFARMNGRTVGIVGNQ) is acyl-CoA binding. An N6-acetyllysine; alternate mark is found at K476 and K491. Residues K476 and K491 each carry the N6-succinyllysine; alternate modification.

The protein belongs to the AccD/PCCB family. In terms of assembly, the holoenzyme is a dodecamer composed of 6 PCCA/alpha subunits and 6 PCCB/beta subunits.

It is found in the mitochondrion matrix. It carries out the reaction propanoyl-CoA + hydrogencarbonate + ATP = (S)-methylmalonyl-CoA + ADP + phosphate + H(+). The catalysed reaction is butanoyl-CoA + hydrogencarbonate + ATP = (2S)-ethylmalonyl-CoA + ADP + phosphate + H(+). Its pathway is metabolic intermediate metabolism; propanoyl-CoA degradation; succinyl-CoA from propanoyl-CoA: step 1/3. Its function is as follows. This is one of the 2 subunits of the biotin-dependent propionyl-CoA carboxylase (PCC), a mitochondrial enzyme involved in the catabolism of odd chain fatty acids, branched-chain amino acids isoleucine, threonine, methionine, and valine and other metabolites. Propionyl-CoA carboxylase catalyzes the carboxylation of propionyl-CoA/propanoyl-CoA to D-methylmalonyl-CoA/(S)-methylmalonyl-CoA. Within the holoenzyme, the alpha subunit catalyzes the ATP-dependent carboxylation of the biotin carried by the biotin carboxyl carrier (BCC) domain, while the beta subunit then transfers the carboxyl group from carboxylated biotin to propionyl-CoA. Propionyl-CoA carboxylase also significantly acts on butyryl-CoA/butanoyl-CoA, which is converted to ethylmalonyl-CoA/(2S)-ethylmalonyl-CoA. Other alternative minor substrates include (2E)-butenoyl-CoA/crotonoyl-CoA. In Rattus norvegicus (Rat), this protein is Propionyl-CoA carboxylase beta chain, mitochondrial.